The sequence spans 436 residues: MTSNAELFSAAQAVIPGGVDSPVRAYGSVGGVPRFIEKAQGPWIWDAEGTRYVDLVCTWGPALLGHARPEVVSAVQVAASKGLSFGAPTRTETELADAIIERMAPVEKVRFVSTGTEATMTAVRLARGATGRDVIVKFAGNYHGHSDVLLAAAGSGVATAGLPGSAGVPAASTADTIVVDYNDVAALDAVFSERGDQIAAVIVESCPANMGVVPPEPGFNAAIRRLTTEHGALMITDEVLTGFRCSPSGFWGLQQQAGEDFAPDIFTFGKVVGGGMPLAALGGHADVMDLLAPTGPVYQAGTLSGNPLATVAGVKTLQLADAEVYQRLDVRSEKWRNELESALDAAGVTYRLQNAGNLFSVFLGVDSPVRNYDNAKSQNAEAYTAFFHAMLDAGVNLPPSCFEAWFLSDAHDDEAFEVFRAALPRAAQAAAQVISA.

Residue Lys270 is modified to N6-(pyridoxal phosphate)lysine.

It belongs to the class-III pyridoxal-phosphate-dependent aminotransferase family. HemL subfamily. Homodimer. The cofactor is pyridoxal 5'-phosphate.

The protein localises to the cytoplasm. It carries out the reaction (S)-4-amino-5-oxopentanoate = 5-aminolevulinate. It functions in the pathway porphyrin-containing compound metabolism; protoporphyrin-IX biosynthesis; 5-aminolevulinate from L-glutamyl-tRNA(Glu): step 2/2. The chain is Glutamate-1-semialdehyde 2,1-aminomutase from Cutibacterium acnes (strain DSM 16379 / KPA171202) (Propionibacterium acnes).